Consider the following 285-residue polypeptide: Nucleotide-binding protein PSPPH_4154 (285 aa).

8–15 (GRSGSGKS) contacts ATP. GTP is bound at residue 60–63 (DARN).

Belongs to the RapZ-like family.

Functionally, displays ATPase and GTPase activities. This is Nucleotide-binding protein PSPPH_4154 from Pseudomonas savastanoi pv. phaseolicola (strain 1448A / Race 6) (Pseudomonas syringae pv. phaseolicola (strain 1448A / Race 6)).